A 326-amino-acid polypeptide reads, in one-letter code: Ankyrin repeat domain-containing protein 9 (326 aa).

A disordered region spans residues 1–20 (MPWDTRPGRSANGGPEGPGA). One copy of the ANK 1 repeat lies at 70-99 (SPSEALLYALVHDHQAYAHYLLATFPRCAL). The Important role in both nutrient sensing and binding/regulation of IMPDH2 signature appears at 108 to 109 (CC). 2 ANK repeats span residues 111–140 (APGP…DFPV) and 157–186 (GGGT…SPGL).

Part of an E3 ubiquitin-protein ligase complex with Elongin BC (ELOB and ELOC), CUL5 and ANKRD9. Interacts with IMPDH2; leading to ubiquitination of IMPDH2 and its subsequent proteasomal degradation.

It localises to the cytoplasmic vesicle. The protein resides in the cytoplasm. Its subcellular location is the cytosol. Its pathway is protein modification; protein ubiquitination. Substrate receptor subunit of a cullin-RING superfamily E3 ligase complex (CUL5-based E3 ubiquitin ligase complex) which mediates the ubiquitination and subsequent proteasomal degradation of target proteins. Depending of the metabolic state of the cell, promotes the proteasomal degradation of IMPDH2, the rate-limiting enzyme in GTP biosynthesis or protects IMPDH2 by stabilizing IMPDH2 filaments assembly. Implicated in different cellular processes, like copper homeostasis and cell proliferation. The protein is Ankyrin repeat domain-containing protein 9 (Ankrd9) of Mus musculus (Mouse).